A 42-amino-acid chain; its full sequence is Thymosin beta-10 (42 aa).

Basic and acidic residues-rich tracts occupy residues 1–25 (MADK…ETQE) and 33–42 (ETIEQEKQAK). A disordered region spans residues 1-42 (MADKPDMGEINSFDKAKLKKTETQEKNTLPTKETIEQEKQAK). Alanine 2 carries the post-translational modification N-acetylalanine. The residue at position 4 (lysine 4) is an N6-acetyllysine. Serine 12 carries the post-translational modification Phosphoserine. Residue lysine 15 is modified to N6-acetyllysine. Phosphothreonine is present on residues threonine 21, threonine 23, and threonine 34. Lysine 39 carries the post-translational modification N6-acetyllysine.

It belongs to the thymosin beta family.

The protein resides in the cytoplasm. It localises to the cytoskeleton. Its function is as follows. Plays an important role in the organization of the cytoskeleton. Binds to and sequesters actin monomers (G actin) and therefore inhibits actin polymerization. This is Thymosin beta-10 (TMSB10) from Sus scrofa (Pig).